A 355-amino-acid chain; its full sequence is Ribosomal RNA small subunit methyltransferase H (355 aa).

Residues glycine 47–tyrosine 49, aspartate 65, phenylalanine 92, aspartate 113, and glutamine 120 each bind S-adenosyl-L-methionine. The interval leucine 332–arginine 355 is disordered. Over residues serine 346 to arginine 355 the composition is skewed to basic residues.

It belongs to the methyltransferase superfamily. RsmH family.

It is found in the cytoplasm. It catalyses the reaction cytidine(1402) in 16S rRNA + S-adenosyl-L-methionine = N(4)-methylcytidine(1402) in 16S rRNA + S-adenosyl-L-homocysteine + H(+). In terms of biological role, specifically methylates the N4 position of cytidine in position 1402 (C1402) of 16S rRNA. The protein is Ribosomal RNA small subunit methyltransferase H of Beijerinckia indica subsp. indica (strain ATCC 9039 / DSM 1715 / NCIMB 8712).